The following is a 350-amino-acid chain: Beta-ketodecanoyl-[acyl-carrier-protein] synthase (350 aa).

Cys133 is a catalytic residue.

This sequence belongs to the thiolase-like superfamily. Beta-ketoacyl-ACP synthases family.

It carries out the reaction octanoyl-CoA + malonyl-[ACP] + H(+) = 3-oxodecanoyl-[ACP] + CO2 + CoA. It functions in the pathway lipid metabolism; fatty acid biosynthesis. Its function is as follows. Catalyzes the condensation of octanoyl-CoA, obtained from exogenously supplied fatty acids via beta-oxidation, with malonyl-[acyl-carrier protein], forming 3-oxodecanoyl-[acyl-carrier protein], an intermediate of the fatty acid elongation cycle that can then be extended to supply all of the cellular fatty acid needs. The enzyme thereby shunts fatty acid degradation intermediates from the beta-oxidation pathway into de novo fatty acid biosynthesis. The protein is Beta-ketodecanoyl-[acyl-carrier-protein] synthase of Pseudomonas aeruginosa (strain ATCC 15692 / DSM 22644 / CIP 104116 / JCM 14847 / LMG 12228 / 1C / PRS 101 / PAO1).